Consider the following 396-residue polypeptide: NADH-quinone oxidoreductase subunit D 1 (396 aa).

Belongs to the complex I 49 kDa subunit family. In terms of assembly, NDH-1 is composed of 14 different subunits. Subunits NuoB, C, D, E, F, and G constitute the peripheral sector of the complex.

It is found in the cell inner membrane. It catalyses the reaction a quinone + NADH + 5 H(+)(in) = a quinol + NAD(+) + 4 H(+)(out). NDH-1 shuttles electrons from NADH, via FMN and iron-sulfur (Fe-S) centers, to quinones in the respiratory chain. The immediate electron acceptor for the enzyme in this species is believed to be ubiquinone. Couples the redox reaction to proton translocation (for every two electrons transferred, four hydrogen ions are translocated across the cytoplasmic membrane), and thus conserves the redox energy in a proton gradient. In Rhizobium meliloti (strain 1021) (Ensifer meliloti), this protein is NADH-quinone oxidoreductase subunit D 1.